The chain runs to 384 residues: Putative glutamate--cysteine ligase 2-2 (384 aa).

Belongs to the glutamate--cysteine ligase type 2 family. YbdK subfamily.

It catalyses the reaction L-cysteine + L-glutamate + ATP = gamma-L-glutamyl-L-cysteine + ADP + phosphate + H(+). Its function is as follows. ATP-dependent carboxylate-amine ligase which exhibits weak glutamate--cysteine ligase activity. The sequence is that of Putative glutamate--cysteine ligase 2-2 from Rubrobacter xylanophilus (strain DSM 9941 / JCM 11954 / NBRC 16129 / PRD-1).